A 529-amino-acid polypeptide reads, in one-letter code: Keratin, type II cytoskeletal 74 (529 aa).

Positions 1 to 139 (MSRQLNIKSS…DPEIQKVRAQ (139 aa)) are head. Residues 140-175 (EREQIKVLNDKFASFIDKVRFLEQQNQVLETKWELL) are coil 1A. Positions 140–453 (EREQIKVLND…KLLEGEECRM (314 aa)) constitute an IF rod domain. The linker 1 stretch occupies residues 176–194 (QQLDLNNCKKNLEPILEGY). A coil 1B region spans residues 195 to 286 (ISNLRKQLET…CLYDAEIAQI (92 aa)). The segment at 287 to 310 (QTHASETSVILSMDNNRDLDLDSI) is linker 12. The tract at residues 311–449 (IAEVRMHYEE…ATYRKLLEGE (139 aa)) is coil 2. Residues 450-529 (ECRMSGENPS…ASIPARKATR (80 aa)) are tail. The segment covering 484–500 (GASAVAGSSGSTQSGQT) has biased composition (low complexity). A disordered region spans residues 484-529 (GASAVAGSSGSTQSGQTKTTEARGGDLKDTQGKSTPASIPARKATR). Over residues 503–514 (TEARGGDLKDTQ) the composition is skewed to basic and acidic residues. Thr-513 carries the post-translational modification Phosphothreonine.

This sequence belongs to the intermediate filament family. Heterotetramer of two type I and two type II keratins. Highly expressed in hair follicles from scalp. In hair, it is specifically present in the inner root sheath (IRS) of the hair follicle. Present in the IRS Huxley layer, but not in Henle layer or cuticle of the IRS. In the IRS Huxley layer, it is expressed in specialized Huxley cells, termed 'Fluegelzellen, along the area of differentiated Henle cells (at protein level).

Functionally, has a role in hair formation. Specific component of keratin intermediate filaments in the inner root sheath (IRS) of the hair follicle. This is Keratin, type II cytoskeletal 74 (KRT74) from Homo sapiens (Human).